The primary structure comprises 372 residues: Citrate/2-methylcitrate synthase (372 aa).

His188 is a substrate binding site. His223 is a catalytic residue. 256 to 260 is a binding site for CoA; it reads KIMGF. The active site involves His262. Arg272 contributes to the substrate binding site. The active site involves Asp314. Arg339 and Arg358 together coordinate substrate.

Belongs to the citrate synthase family.

It carries out the reaction propanoyl-CoA + oxaloacetate + H2O = 2-methylcitrate + CoA + H(+). The catalysed reaction is oxaloacetate + acetyl-CoA + H2O = citrate + CoA + H(+). It functions in the pathway carbohydrate metabolism; tricarboxylic acid cycle; isocitrate from oxaloacetate: step 1/2. Involved in both the tricarboxylic acid (TCA) and methylcitric acid cycles. Has both 2-methylcitrate synthase and citrate synthase activities. Catalyzes the condensation of propionyl-CoA and oxaloacetate to yield 2-methylcitrate (2-MC) and CoA, and the condensation of acetyl-CoA and oxaloacetate to yield citrate and CoA. Has 2.3-fold higher activity as a 2-methylcitrate synthase. Catalyzes the formation of either (2S,3R)- or (2R,3S)-2-methylcitrate. In Bacillus subtilis (strain 168), this protein is Citrate/2-methylcitrate synthase.